Consider the following 140-residue polypeptide: Large-conductance mechanosensitive channel (140 aa).

The next 2 membrane-spanning stretches (helical) occupy residues 9-29 (AFAL…GAAF) and 86-106 (GSFL…FLMV).

Belongs to the MscL family. Homopentamer.

The protein localises to the cell inner membrane. Functionally, channel that opens in response to stretch forces in the membrane lipid bilayer. May participate in the regulation of osmotic pressure changes within the cell. This is Large-conductance mechanosensitive channel from Anaeromyxobacter dehalogenans (strain 2CP-1 / ATCC BAA-258).